The chain runs to 364 residues: Spermidine/putrescine import ATP-binding protein PotA (364 aa).

The 231-residue stretch at 5–235 (LSFKGVTKGF…PVNRFVADFI (231 aa)) folds into the ABC transporter domain. 37–44 (GPSGCGKT) is a binding site for ATP.

Belongs to the ABC transporter superfamily. Spermidine/putrescine importer (TC 3.A.1.11.1) family. In terms of assembly, the complex is composed of two ATP-binding proteins (PotA), two transmembrane proteins (PotB and PotC) and a solute-binding protein (PotD).

Its subcellular location is the cell membrane. It catalyses the reaction ATP + H2O + polyamine-[polyamine-binding protein]Side 1 = ADP + phosphate + polyamineSide 2 + [polyamine-binding protein]Side 1.. In terms of biological role, part of the ABC transporter complex PotABCD involved in spermidine/putrescine import. Responsible for energy coupling to the transport system. The sequence is that of Spermidine/putrescine import ATP-binding protein PotA from Staphylococcus haemolyticus (strain JCSC1435).